A 527-amino-acid polypeptide reads, in one-letter code: Light-independent protochlorophyllide reductase subunit B (527 aa).

Position 36 (Asp-36) interacts with [4Fe-4S] cluster. Catalysis depends on Asp-290, which acts as the Proton donor. 425 to 426 (GL) contributes to the substrate binding site.

Belongs to the ChlB/BchB/BchZ family. In terms of assembly, protochlorophyllide reductase is composed of three subunits; ChlL, ChlN and ChlB. Forms a heterotetramer of two ChlB and two ChlN subunits. [4Fe-4S] cluster is required as a cofactor.

The catalysed reaction is chlorophyllide a + oxidized 2[4Fe-4S]-[ferredoxin] + 2 ADP + 2 phosphate = protochlorophyllide a + reduced 2[4Fe-4S]-[ferredoxin] + 2 ATP + 2 H2O. The protein operates within porphyrin-containing compound metabolism; chlorophyll biosynthesis (light-independent). Functionally, component of the dark-operative protochlorophyllide reductase (DPOR) that uses Mg-ATP and reduced ferredoxin to reduce ring D of protochlorophyllide (Pchlide) to form chlorophyllide a (Chlide). This reaction is light-independent. The NB-protein (ChlN-ChlB) is the catalytic component of the complex. The sequence is that of Light-independent protochlorophyllide reductase subunit B from Synechococcus sp. (strain RCC307).